A 229-amino-acid polypeptide reads, in one-letter code: Heptaprenylglyceryl phosphate synthase (229 aa).

Lys12 contacts sn-glycerol 1-phosphate. Residues Asp14 and Ser40 each coordinate Mg(2+). Sn-glycerol 1-phosphate-binding positions include 159-164, Gly189, and 209-210; these read YLEYSG and GN.

It belongs to the GGGP/HepGP synthase family. Group I subfamily. As to quaternary structure, homodimer. Requires Mg(2+) as cofactor.

It catalyses the reaction sn-glycerol 1-phosphate + all-trans-heptaprenyl diphosphate = 3-heptaprenyl-sn-glycero-1-phosphate + diphosphate. It participates in membrane lipid metabolism; glycerophospholipid metabolism. Prenyltransferase that catalyzes in vivo the transfer of the heptaprenyl moiety of heptaprenyl pyrophosphate (HepPP; 35 carbon atoms) to the C3 hydroxyl of sn-glycerol-1-phosphate (G1P), producing heptaprenylglyceryl phosphate (HepGP). This reaction is an ether-bond-formation step in the biosynthesis of archaea-type G1P-based membrane lipids found in Bacillales. In Bacillus cereus (strain G9842), this protein is Heptaprenylglyceryl phosphate synthase.